A 122-amino-acid chain; its full sequence is Large ribosomal subunit protein uL14 (122 aa).

This sequence belongs to the universal ribosomal protein uL14 family. Part of the 50S ribosomal subunit. Forms a cluster with proteins L3 and L19. In the 70S ribosome, L14 and L19 interact and together make contacts with the 16S rRNA in bridges B5 and B8.

Binds to 23S rRNA. Forms part of two intersubunit bridges in the 70S ribosome. The sequence is that of Large ribosomal subunit protein uL14 from Bradyrhizobium diazoefficiens (strain JCM 10833 / BCRC 13528 / IAM 13628 / NBRC 14792 / USDA 110).